Here is a 549-residue protein sequence, read N- to C-terminus: Glucose-6-phosphate isomerase (549 aa).

The active-site Proton donor is Glu355. Catalysis depends on residues His387 and Lys515.

The protein belongs to the GPI family.

It is found in the cytoplasm. The enzyme catalyses alpha-D-glucose 6-phosphate = beta-D-fructose 6-phosphate. It functions in the pathway carbohydrate biosynthesis; gluconeogenesis. Its pathway is carbohydrate degradation; glycolysis; D-glyceraldehyde 3-phosphate and glycerone phosphate from D-glucose: step 2/4. Catalyzes the reversible isomerization of glucose-6-phosphate to fructose-6-phosphate. In Histophilus somni (strain 2336) (Haemophilus somnus), this protein is Glucose-6-phosphate isomerase.